Consider the following 454-residue polypeptide: Butyrophilin-like protein 2 (454 aa).

Residues 1 to 6 (MVDCPR) are Cytoplasmic-facing. A helical; Signal-anchor for type II membrane protein membrane pass occupies residues 7 to 23 (YSLSGVAASFLFVLLTI). At 24 to 454 (KHPDDFRVVG…KTARFPLSGW (431 aa)) the chain is on the extracellular side. Ig-like V-type domains follow at residues 27 to 140 (DDFR…VLLQ), 148 to 234 (PNIH…ATIA), 244 to 355 (ASVS…ARVD), and 365 to 452 (PRIT…FPLS). Disulfide bonds link Cys50–Cys124, Cys164–Cys218, Cys267–Cys341, and Cys381–Cys435. Asn210, Asn296, Asn427, and Asn432 each carry an N-linked (GlcNAc...) asparagine glycan.

The protein belongs to the immunoglobulin superfamily. BTN/MOG family. In terms of tissue distribution, highly expressed in intestine and at reduced levels in lung and stomach. Also expressed in thymus, spleen, lymph nodes, T-cells, B-cells, and macrophages.

It is found in the membrane. Functionally, negative regulator of T-cell proliferation. The polypeptide is Butyrophilin-like protein 2 (Mus musculus (Mouse)).